An 80-amino-acid chain; its full sequence is Beta-toxin KAaH2 (80 aa).

Residues 1–22 form the signal peptide; that stretch reads MMKLMLFSIIVILFSLIGSIHG. Residues 25–80 form the LCN-type CS-alpha/beta domain; the sequence is VPGNYPLDSSDDTYLCAPLGENPSCIQICRKHGVKYGYCYAFQCWCEYLEDKNVKI. Cystine bridges form between Cys-40–Cys-63, Cys-49–Cys-68, and Cys-53–Cys-70.

The protein belongs to the long (3 C-C) scorpion toxin superfamily. Sodium/Potassium channel inhibitor family. As to expression, expressed by the venom gland.

Its subcellular location is the secreted. Its function is as follows. Weakly inhibits the vertebrate potassium channel Kv1.1/KCNA1. This Androctonus australis (Sahara scorpion) protein is Beta-toxin KAaH2.